The primary structure comprises 372 residues: Fatty acid 2-hydroxylase (372 aa).

The Cytochrome b5 heme-binding domain occupies 8–86 (AASFSPSEVQ…LEQYYVGELR (79 aa)). The heme site is built by H43 and H69. A run of 2 helical transmembrane segments spans residues 168–188 (VWYS…WSYY) and 213–233 (SMFP…EYLI). Positions 219-361 (FMLGIFLWSL…TKLWDYCFHT (143 aa)) constitute a Fatty acid hydroxylase domain. Zn(2+) is bound by residues H234, H239, H257, H260, and H261. Helical transmembrane passes span 271–291 (VFPP…LQLI) and 292–312 (LPEA…VLYD). The Zn(2+) site is built by H315, H319, H336, H339, and H340.

It belongs to the sterol desaturase family. SCS7 subfamily. It depends on Zn(2+) as a cofactor.

The protein localises to the endoplasmic reticulum membrane. It is found in the microsome membrane. The catalysed reaction is a 1,2-saturated fatty acid + 2 Fe(II)-[cytochrome b5] + O2 + 2 H(+) = a (R)-2-hydroxy fatty acid + 2 Fe(III)-[cytochrome b5] + H2O. It catalyses the reaction hexadecanoate + 2 Fe(II)-[cytochrome b5] + O2 + 2 H(+) = (R)-2-hydroxyhexadecanoate + 2 Fe(III)-[cytochrome b5] + H2O. It carries out the reaction octadecanoate + 2 Fe(II)-[cytochrome b5] + O2 + 2 H(+) = (R)-2-hydroxyoctadecanoate + 2 Fe(III)-[cytochrome b5] + H2O. The enzyme catalyses docosanoate + 2 Fe(II)-[cytochrome b5] + O2 + 2 H(+) = 2-hydroxydocosanoate + 2 Fe(III)-[cytochrome b5] + H2O. The catalysed reaction is tetracosanoate + 2 Fe(II)-[cytochrome b5] + O2 + 2 H(+) = (R)-2-hydroxytetracosanoate + 2 Fe(III)-[cytochrome b5] + H2O. Its pathway is lipid metabolism; fatty acid metabolism. It functions in the pathway sphingolipid metabolism; galactosylceramide biosynthesis. Catalyzes the hydroxylation of free fatty acids at the C-2 position to produce 2-hydroxy fatty acids, which are building blocks of sphingolipids and glycosphingolipids common in neural tissue and epidermis. FA2H is stereospecific for the production of (R)-2-hydroxy fatty acids. Plays an essential role in the synthesis of galactosphingolipids of the myelin sheath. Responsible for the synthesis of sphingolipids and glycosphingolipids involved in the formation of epidermal lamellar bodies critical for skin permeability barrier. Participates in the synthesis of glycosphingolipids and a fraction of type II wax diesters in sebaceous gland, specifically regulating hair follicle homeostasis. Involved in the synthesis of sphingolipids of plasma membrane rafts, controlling lipid raft mobility and trafficking of raft-associated proteins. The protein is Fatty acid 2-hydroxylase (FA2H) of Macaca fascicularis (Crab-eating macaque).